The following is a 93-amino-acid chain: Small ribosomal subunit protein uS19 (93 aa).

Belongs to the universal ribosomal protein uS19 family.

Protein S19 forms a complex with S13 that binds strongly to the 16S ribosomal RNA. This Ehrlichia canis (strain Jake) protein is Small ribosomal subunit protein uS19.